Reading from the N-terminus, the 520-residue chain is Cell adhesion molecule CEACAM2 (520 aa).

A signal peptide spans 1-34 (MELASAHLHKGQVPWFGLLLTASLLASWSPPTTA). In terms of domain architecture, Ig-like V-type spans 35–141 (QVTVMAFPLH…RVLTGQFHVH (107 aa)). Topologically, residues 35 to 422 (QVTVMAFPLH…IFDSTYDISD (388 aa)) are extracellular. Asn-87, Asn-104, Asn-148, Asn-152, Asn-175, Asn-199, Asn-206, Asn-210, Asn-226, Asn-258, Asn-290, Asn-294, Asn-304, Asn-317, Asn-333, and Asn-361 each carry an N-linked (GlcNAc...) asparagine glycan. 3 Ig-like C2-type domains span residues 145 to 234 (LKSN…FSLN), 239 to 319 (PDTP…KNIT), and 327 to 411 (PSLQ…IKLE). An intrachain disulfide couples Cys-167 to Cys-217. A disulfide bridge connects residues Cys-261 and Cys-301. An intrachain disulfide couples Cys-346 to Cys-394. Residues 423-443 (VPIAVIITGAVAGVILIAGLA) form a helical membrane-spanning segment. Residues 444–520 (YRLCSRKSRW…ETVYSEVKKK (77 aa)) are Cytoplasmic-facing. The tract at residues 457–520 (QRDLTEHKPS…ETVYSEVKKK (64 aa)) is disordered. Residues 466 to 480 (SASNHNLAPSDNSPN) show a composition bias toward polar residues. Tyr-487 is subject to Phosphotyrosine. Residues 490–513 (LNFNSQQPNRPTSAPSSPRATETV) show a composition bias toward polar residues. Residue Ser-502 is modified to Phosphoserine. Tyr-514 bears the Phosphotyrosine mark.

This sequence belongs to the immunoglobulin superfamily. CEA family. Interacts weakly with MHV spike protein in tissue culture. Isoform 2 is detected in elongating spermatids within the seminiferous epithelium (at protein level). Expressed in kidney, colon, uterus, gut mononuclear cells, crypt epithelia of intestinal tissues, and to a lesser extent, in spleen. Expressed in brain including VMH, globus pallidus, ventral pallidum, striatum, olfactory bulb and hippocampus. Also detected in rectal carcinoma cell line CMT93. Isoform 2 and isoform 3 are expressed in testis. Isoform 2 is detected in seminiferous tubule, not detected in epididymal spermatozoa. Also not observed on spermatogonia, spermatocytes, round spermatids or somatic Sertoli cells. During stages I-VII of spermatogenesis, detected on the elongating spermatids. At spermiation (stage VIII) and subsequent stages IX-XII, levels are drastically reduced or absent in the seminiferous tubules. Sometimes weakly detected in the apical region of stage-VIII seminiferous epithelium. Isoform 2 level is very low in stomach, kidney, intestine, liver and spleen.

The protein resides in the cell membrane. Functionally, controls energy balance and peripheral insulin action. Involved in the regulation of feeding behavior particularly in the ventromedial nucleus of hypothalamus (VMH) regulation of food intake. Has a role in the regulation of metabolic rate and insulin sensitivity or resistance via effects on brown adipogenesis, sympathetic nervous outflow to brown adipose tissue, spontaneous activity and energy expenditure in skeletal muscle. In case of murine coronavirus (MHV) infection, does probably not serve as functional receptor for the virus. Its function is as follows. Isoform 2 may be an adhesion molecule contributing to cell to cell adhesion between elongating spermatids and Sertoli cells within the seminiferous epithelium. This Mus musculus (Mouse) protein is Cell adhesion molecule CEACAM2.